Consider the following 2458-residue polypeptide: Acetyl-CoA carboxylase 2 (2458 aa).

Residue Ser35 is modified to Phosphoserine. The disordered stretch occupies residues 35-155 (SKSEANLIPS…SPSKEDKKQA (121 aa)). Over residues 51-60 (SDNSGETPQR) the composition is skewed to polar residues. Thr70 is modified (phosphothreonine). Over residues 77 to 87 (ASHKGPKDAGR) the composition is skewed to basic and acidic residues. 2 positions are modified to phosphoserine: Ser91 and Ser95. Residues 103–146 (PLSSSDAAPSPELQANGTGTQGLEATDTNGLSSSARPQGQQAGS) show a composition bias toward polar residues. Residues Ser169, Ser175, Ser192, Ser195, and Ser200 each carry the phosphoserine modification. The disordered stretch occupies residues 174-193 (SSDEDSVAGSSRESTRKGSR). Phosphothreonine is present on Thr207. The residue at position 220 (Ser220) is a Phosphoserine. A Phosphoserine; by AMPK modification is found at Ser222. One can recognise a Biotin carboxylation domain in the interval 259–761 (VIEKVLIANN…DTGWLDYLIA (503 aa)). The ATP-grasp domain occupies 414–609 (DDLQQGKRIS…LPAAQLQIAM (196 aa)). An ATP-binding site is contributed by 458-463 (GGGGKG). Phosphoserine is present on Ser469. The Mg(2+) site is built by Glu567, Glu580, and Asn582. Positions 567, 580, and 582 each coordinate Mn(2+). Arg584 is an active-site residue. Residue Thr753 is modified to Phosphothreonine. The region spanning 888-962 (FEKENDPTVL…EAGCVVARLE (75 aa)) is the Biotinyl-binding domain. N6-biotinyllysine is present on Lys929. Residue Ser1340 is modified to Phosphoserine. Thr1342 bears the Phosphothreonine mark. Ser1360 and Ser1405 each carry phosphoserine. Residues 1695 to 2025 (PYVTKDLLQA…DNHSPVPIIT (331 aa)) enclose the CoA carboxyltransferase N-terminal domain. The carboxyltransferase stretch occupies residues 1695-2345 (PYVTKDLLQA…EDQVKQEILQ (651 aa)). CoA contacts are provided by Arg1934, Lys2238, and Arg2240. A CoA carboxyltransferase C-terminal domain is found at 2029 to 2345 (PIDREIEFLP…EDQVKQEILQ (317 aa)).

In terms of assembly, monomer, homodimer, and homotetramer. Forms filamentous polymers. Interacts with MID1IP1; interaction with MID1IP1 promotes oligomerization and increases its activity in a citrate-dependent manner. Biotin is required as a cofactor. Mg(2+) serves as cofactor. Requires Mn(2+) as cofactor. The biotin cofactor is covalently attached to the central biotinyl-binding domain and is required for the catalytic activity. Post-translationally, phosphorylation at Ser-222 by AMPK inactivates the enzyme. Required for the maintenance of skeletal muscle lipid and glucose homeostasis. In terms of tissue distribution, widely expressed with highest levels in heart, skeletal muscle, liver, adipose tissue, mammary gland, adrenal gland and colon. Isoform 3 is expressed in skeletal muscle, adipose tissue and liver (at protein level). Isoform 3 is detected at high levels in adipose tissue with lower levels in heart, liver, skeletal muscle and testis.

It localises to the mitochondrion. It catalyses the reaction hydrogencarbonate + acetyl-CoA + ATP = malonyl-CoA + ADP + phosphate + H(+). It functions in the pathway lipid metabolism; malonyl-CoA biosynthesis; malonyl-CoA from acetyl-CoA: step 1/1. Activity is increased by oligomerization of the protein into filaments. The oligomerization and the activity of the enzyme are inhibited by phosphorylation at Ser-222. Inhibited by its product, malonyl-CoA. Activated by citrate. Activation by MID1IP1 is citrate-dependent. Soraphen A, inhibits the enzyme by preventing the formation of active filamentous oligomers. Its function is as follows. Mitochondrial enzyme that catalyzes the carboxylation of acetyl-CoA to malonyl-CoA and plays a central role in fatty acid metabolism. Catalyzes a 2 steps reaction starting with the ATP-dependent carboxylation of the biotin carried by the biotin carboxyl carrier (BCC) domain followed by the transfer of the carboxyl group from carboxylated biotin to acetyl-CoA. Through the production of malonyl-CoA that allosterically inhibits carnitine palmitoyltransferase 1 at the mitochondria, negatively regulates fatty acid oxidation. Together with its cytosolic isozyme ACACA, which is involved in de novo fatty acid biosynthesis, promotes lipid storage. In Homo sapiens (Human), this protein is Acetyl-CoA carboxylase 2.